The chain runs to 887 residues: Dystrophin-like protein 1 (887 aa).

A PID domain is found at 30 to 197; the sequence is YQHGIHFEAK…KISMQSEDEA (168 aa). Basic and acidic residues-rich tracts occupy residues 176–186 and 205–216; these read MQEKHEDEAAK and IEERGGREEDSR. 5 disordered regions span residues 176–254, 506–606, 641–753, 804–839, and 853–887; these read MQEK…GTAI, EIHH…QYER, QFDM…KNTA, IAEE…PPNT, and NVDR…GYPQ. Residues 242–254 show a composition bias toward polar residues; it reads KPSTTSSSGGTAI. A coiled-coil region spans residues 434-506; sequence QLMRSQLDQA…QMLETKITSE (73 aa). The segment covering 510–519 has biased composition (low complexity); sequence SSSQPPQHQP. Residues 573-588 show a composition bias toward basic and acidic residues; it reads KESKERRKDEGTRTEP. Positions 597–606 are enriched in polar residues; sequence DYSSSDQYER. Polar residues-rich tracts occupy residues 816-827 and 863-887; these read NRNNLPSSTNSS and SLLT…GYPQ.

Component of the dystrophin glycoprotein complex (DGC). Interacts with zyx-1. As to expression, expressed in muscles of the head, body wall and vulva. In some animals, weaker expression is observed in the intestinal muscles (at protein level). Isoform a is expressed in lateral neurons SDQL and SDQR.

Functionally, together with dys-1 and hlh-1, participates in a common muscular function. The sequence is that of Dystrophin-like protein 1 from Caenorhabditis elegans.